Here is a 1188-residue protein sequence, read N- to C-terminus: Zinc finger SWIM domain-containing protein 5 (1188 aa).

Basic and acidic residues predominate over residues 1–10; that stretch reads MAEGGEREEL. Disordered stretches follow at residues 1–46 and 123–171; these read MAEG…GAGG and AGAA…TGTA. 2 stretches are compositionally biased toward low complexity: residues 126-136 and 146-155; these read AAGAAGASPVE and AAPAGSAPGA. The segment covering 156-171 has biased composition (gly residues); sequence AGAGSSPGLGAGTGTA. The SWIM-type zinc finger occupies 222-259; it reads YKVAISFDRCKITSVSCGCGNKDIFYCAHVVALSLYRI.

This is Zinc finger SWIM domain-containing protein 5 (Zswim5) from Mus musculus (Mouse).